The following is a 1439-amino-acid chain: Histone-lysine N-methyltransferase NSD3 (1439 aa).

Residues P121–P151 are disordered. Pro residues predominate over residues P128–V139. At S150 the chain carries Phosphoserine. Residues K154–I157 carry the KIKL motif. Residues Q181 to A247 form a disordered region. Over residues K187–N201 the composition is skewed to basic residues. Residues R202 to L244 are compositionally biased toward basic and acidic residues. Glycyl lysine isopeptide (Lys-Gly) (interchain with G-Cter in SUMO2) cross-links involve residues K218 and K245. One can recognise a PWWP 1 domain in the interval V270–H333. Disordered stretches follow at residues A344 to Q367 and E401 to V466. Composition is skewed to polar residues over residues E401–K413 and V425–T445. K413 is covalently cross-linked (Glycyl lysine isopeptide (Lys-Gly) (interchain with G-Cter in SUMO2)). The residue at position 457 (S457) is a Phosphoserine. Glycyl lysine isopeptide (Lys-Gly) (interchain with G-Cter in SUMO2) cross-links involve residues K502 and K532. Positions Q540–V695 are disordered. Over residues S546–S568 the composition is skewed to polar residues. The span at T583–P595 shows a compositional bias: basic and acidic residues. Phosphoserine occurs at positions 585, 587, and 590. A Glycyl lysine isopeptide (Lys-Gly) (interchain with G-Cter in SUMO2) cross-link involves residue K628. A compositionally biased stretch (polar residues) spans S637–R648. S655 is subject to Phosphoserine. Over residues D670 to S691 the composition is skewed to low complexity. 3 PHD-type zinc fingers span residues D701–G748, Q749–E805, and V862–G955. At K790 the chain carries N6-acetyllysine. The region spanning Y960–G1025 is the PWWP 2 domain. The stretch at I1036–E1065 forms a coiled coil. Positions S1096–L1146 constitute an AWS domain. The SET domain maps to P1148–N1265. Residue K1154 forms a Glycyl lysine isopeptide (Lys-Gly) (interchain with G-Cter in SUMO2) linkage. The region spanning G1272–G1288 is the Post-SET domain. Residues E1323 to D1370 form a PHD-type 4; atypical zinc finger.

This sequence belongs to the class V-like SAM-binding methyltransferase superfamily. Histone-lysine methyltransferase family. SET2 subfamily. Interacts with BRD4. Interacts (via KIKL motif) with BRD3 (via NET domain).

It localises to the nucleus. It is found in the chromosome. The catalysed reaction is L-lysyl(4)-[histone H3] + 2 S-adenosyl-L-methionine = N(6),N(6)-dimethyl-L-lysyl(4)-[histone H3] + 2 S-adenosyl-L-homocysteine + 2 H(+). It catalyses the reaction L-lysyl(27)-[histone H3] + 2 S-adenosyl-L-methionine = N(6),N(6)-dimethyl-L-lysyl(27)-[histone H3] + 2 S-adenosyl-L-homocysteine + 2 H(+). Its function is as follows. Histone methyltransferase. Preferentially dimethylates 'Lys-4' and 'Lys-27' of histone H3 forming H3K4me2 and H3K27me2. H3 'Lys-4' methylation represents a specific tag for epigenetic transcriptional activation, while 'Lys-27' is a mark for transcriptional repression. This chain is Histone-lysine N-methyltransferase NSD3 (Nsd3), found in Mus musculus (Mouse).